Consider the following 366-residue polypeptide: 3-dehydroquinate synthase (366 aa).

NAD(+)-binding positions include 71 to 76 (DGEKYK), 105 to 109 (GVIGD), 129 to 130 (TT), Lys142, Lys151, and 169 to 172 (TLQT). Positions 184, 247, and 264 each coordinate Zn(2+).

This sequence belongs to the sugar phosphate cyclases superfamily. Dehydroquinate synthase family. The cofactor is Co(2+). It depends on Zn(2+) as a cofactor. Requires NAD(+) as cofactor.

The protein localises to the cytoplasm. The enzyme catalyses 7-phospho-2-dehydro-3-deoxy-D-arabino-heptonate = 3-dehydroquinate + phosphate. The protein operates within metabolic intermediate biosynthesis; chorismate biosynthesis; chorismate from D-erythrose 4-phosphate and phosphoenolpyruvate: step 2/7. Functionally, catalyzes the conversion of 3-deoxy-D-arabino-heptulosonate 7-phosphate (DAHP) to dehydroquinate (DHQ). The sequence is that of 3-dehydroquinate synthase from Actinobacillus pleuropneumoniae serotype 5b (strain L20).